Consider the following 333-residue polypeptide: Tetraacyldisaccharide 4'-kinase (333 aa).

60–67 serves as a coordination point for ATP; the sequence is TVGGTGKT.

The protein belongs to the LpxK family.

It catalyses the reaction a lipid A disaccharide + ATP = a lipid IVA + ADP + H(+). It functions in the pathway glycolipid biosynthesis; lipid IV(A) biosynthesis; lipid IV(A) from (3R)-3-hydroxytetradecanoyl-[acyl-carrier-protein] and UDP-N-acetyl-alpha-D-glucosamine: step 6/6. Functionally, transfers the gamma-phosphate of ATP to the 4'-position of a tetraacyldisaccharide 1-phosphate intermediate (termed DS-1-P) to form tetraacyldisaccharide 1,4'-bis-phosphate (lipid IVA). The protein is Tetraacyldisaccharide 4'-kinase of Pseudomonas putida (strain ATCC 700007 / DSM 6899 / JCM 31910 / BCRC 17059 / LMG 24140 / F1).